A 482-amino-acid polypeptide reads, in one-letter code: UDP-glycosyltransferase 86A2 (482 aa).

UDP-alpha-D-glucose is bound by residues Ser-297, 355-357 (CCQ), 372-380 (HCGWNSILE), and 394-397 (LTDQ).

It belongs to the UDP-glycosyltransferase family.

This is UDP-glycosyltransferase 86A2 (UGT86A2) from Arabidopsis thaliana (Mouse-ear cress).